A 240-amino-acid polypeptide reads, in one-letter code: 31 kDa outer-membrane immunogenic protein (240 aa).

A signal peptide spans Met1–Ala19. Residues Asn48–Val83 form an epitope recognized by the monoclonal antibody A59/10F09/G10 region.

This sequence belongs to the Omp25/RopB family. In terms of assembly, oligomeric.

It localises to the cell outer membrane. In terms of biological role, major outer membrane protein associated with peptidoglycans. May function as a porin. The protein is 31 kDa outer-membrane immunogenic protein (omp31) of Brucella melitensis biotype 1 (strain ATCC 23456 / CCUG 17765 / NCTC 10094 / 16M).